Here is a 253-residue protein sequence, read N- to C-terminus: 5-oxoprolinase subunit A (253 aa).

This sequence belongs to the LamB/PxpA family. As to quaternary structure, forms a complex composed of PxpA, PxpB and PxpC.

The catalysed reaction is 5-oxo-L-proline + ATP + 2 H2O = L-glutamate + ADP + phosphate + H(+). Its function is as follows. Catalyzes the cleavage of 5-oxoproline to form L-glutamate coupled to the hydrolysis of ATP to ADP and inorganic phosphate. In Chloroflexus aurantiacus (strain ATCC 29364 / DSM 637 / Y-400-fl), this protein is 5-oxoprolinase subunit A.